Reading from the N-terminus, the 444-residue chain is Protein Z-dependent protease inhibitor (444 aa).

The first 21 residues, 1–21 (MKVVPSLLLSVLLAQVWLVPG), serve as a signal peptide directing secretion. The interval 24 to 65 (PSPQSPETPAPQNQTSRVVQAPKEEEEDEQEASEEKASEEEK) is disordered. N-linked (GlcNAc...) asparagine glycosylation is present at asparagine 36. Serine 56 carries the post-translational modification Phosphoserine; by FAM20C. Basic and acidic residues predominate over residues 56 to 65 (SEEKASEEEK). A heparin-binding region spans residues 136 to 153 (TKPGLLPSLFKGLRETLS). 3 N-linked (GlcNAc...) asparagine glycosylation sites follow: asparagine 180, asparagine 197, and asparagine 295.

This sequence belongs to the serpin family. As to quaternary structure, interacts with PROZ. Post-translationally, phosphorylated by FAM20C in the extracellular medium. In terms of tissue distribution, expressed by the liver and secreted in plasma.

The protein resides in the secreted. Inhibits activity of the coagulation protease factor Xa in the presence of PROZ, calcium and phospholipids. Also inhibits factor XIa in the absence of cofactors. This is Protein Z-dependent protease inhibitor (SERPINA10) from Homo sapiens (Human).